The sequence spans 489 residues: Protein DETOXIFICATION 26 (489 aa).

12 consecutive transmembrane segments (helical) span residues 42-62, 75-95, 125-145, 157-177, 190-210, 217-237, 271-291, 300-320, 342-362, 385-405, 416-436, and 442-462; these read IWYI…ILII, LAAI…LLLG, IILF…TPIL, LTGT…FFFP, VIAI…WFFV, IIGT…ILFL, IMLC…GNLV, LSIC…FFAG, IVSI…IVIF, VLLA…GVAV, INLG…GWIF, and GIWA…LIII.

The protein belongs to the multi antimicrobial extrusion (MATE) (TC 2.A.66.1) family.

Its subcellular location is the membrane. The sequence is that of Protein DETOXIFICATION 26 from Arabidopsis thaliana (Mouse-ear cress).